Reading from the N-terminus, the 725-residue chain is Polyribonucleotide nucleotidyltransferase (725 aa).

Residues Asp506 and Asp512 each contribute to the Mg(2+) site. A KH domain is found at 571–631 (PLIEQFAIDP…QNIIDACEHI (61 aa)). The S1 motif domain occupies 657–724 (DEVVIGKVER…KKDRIELSSA (68 aa)).

The protein belongs to the polyribonucleotide nucleotidyltransferase family. Mg(2+) serves as cofactor.

It localises to the cytoplasm. It catalyses the reaction RNA(n+1) + phosphate = RNA(n) + a ribonucleoside 5'-diphosphate. In terms of biological role, involved in mRNA degradation. Catalyzes the phosphorolysis of single-stranded polyribonucleotides processively in the 3'- to 5'-direction. The protein is Polyribonucleotide nucleotidyltransferase of Aliarcobacter butzleri (strain RM4018) (Arcobacter butzleri).